Here is a 193-residue protein sequence, read N- to C-terminus: 3-isopropylmalate dehydratase small subunit (193 aa).

This sequence belongs to the LeuD family. LeuD type 1 subfamily. In terms of assembly, heterodimer of LeuC and LeuD.

It catalyses the reaction (2R,3S)-3-isopropylmalate = (2S)-2-isopropylmalate. It functions in the pathway amino-acid biosynthesis; L-leucine biosynthesis; L-leucine from 3-methyl-2-oxobutanoate: step 2/4. In terms of biological role, catalyzes the isomerization between 2-isopropylmalate and 3-isopropylmalate, via the formation of 2-isopropylmaleate. The polypeptide is 3-isopropylmalate dehydratase small subunit (Bacillus cereus (strain ATCC 10987 / NRS 248)).